The chain runs to 273 residues: Formamidopyrimidine-DNA glycosylase (273 aa).

Residue Pro-2 is the Schiff-base intermediate with DNA of the active site. The Proton donor role is filled by Glu-3. Lys-57 functions as the Proton donor; for beta-elimination activity in the catalytic mechanism. DNA is bound by residues His-90, Arg-109, and Lys-150. Residues 235–269 (KVYGRAGKECPVCSSKIEEEKIGQRNSFWCGKCQF) form an FPG-type zinc finger. Arg-259 serves as the catalytic Proton donor; for delta-elimination activity.

Belongs to the FPG family. As to quaternary structure, monomer. Zn(2+) serves as cofactor.

The catalysed reaction is Hydrolysis of DNA containing ring-opened 7-methylguanine residues, releasing 2,6-diamino-4-hydroxy-5-(N-methyl)formamidopyrimidine.. It carries out the reaction 2'-deoxyribonucleotide-(2'-deoxyribose 5'-phosphate)-2'-deoxyribonucleotide-DNA = a 3'-end 2'-deoxyribonucleotide-(2,3-dehydro-2,3-deoxyribose 5'-phosphate)-DNA + a 5'-end 5'-phospho-2'-deoxyribonucleoside-DNA + H(+). Its function is as follows. Involved in base excision repair of DNA damaged by oxidation or by mutagenic agents. Acts as a DNA glycosylase that recognizes and removes damaged bases. Has a preference for oxidized purines, such as 7,8-dihydro-8-oxoguanine (8-oxoG). Has AP (apurinic/apyrimidinic) lyase activity and introduces nicks in the DNA strand. Cleaves the DNA backbone by beta-delta elimination to generate a single-strand break at the site of the removed base with both 3'- and 5'-phosphates. This is Formamidopyrimidine-DNA glycosylase from Aliivibrio fischeri (strain MJ11) (Vibrio fischeri).